An 85-amino-acid chain; its full sequence is Beta-insect depressant toxin Lqh-dprIT3e (85 aa).

Positions 1–21 (MKLLLLLTISASMLIEGLVNA) are cleaved as a signal peptide. Positions 22-82 (DGYIRGGDGC…EWDYETDTCG (61 aa)) constitute an LCN-type CS-alpha/beta domain. Disulfide bonds link C31/C81, C35/C56, C42/C63, and C46/C65. A Glycine amide modification is found at G82.

Belongs to the long (4 C-C) scorpion toxin superfamily. Sodium channel inhibitor family. Beta subfamily. Expressed by the venom gland.

It is found in the secreted. Functionally, depressant insect beta-toxins cause a transient contraction paralysis followed by a slow flaccid paralysis. They bind voltage-independently at site-4 of sodium channels (Nav) and block action potentials, primarily by depolarizing the axonal membrane and suppressing the sodium current. This depressant toxin is active only on insects. It is found in a relatively small amount in the venom. This chain is Beta-insect depressant toxin Lqh-dprIT3e, found in Leiurus hebraeus (Hebrew deathstalker scorpion).